A 188-amino-acid chain; its full sequence is Vascular endothelial growth factor A-A (188 aa).

The N-terminal stretch at 1–23 (MNLVVYLIQLFLAALLHLSAVKA) is a signal peptide. Cystine bridges form between C49/C91, C80/C125, and C84/C127. N-linked (GlcNAc...) asparagine glycosylation occurs at N98.

This sequence belongs to the PDGF/VEGF growth factor family. As to quaternary structure, homodimer; disulfide-linked. Isoform VEGF165 binds kdr and kdrl. Predominantly expressed in regions associated with active vascularization. From 15-16 hours post-fertilization (hpf), expressed in the anterior forebrain, the mesoderm underlying and lateral to the anterior hindbrain, the mesoderm underlying and lateral to the posterior hindbrain, and in the ventral medial portions of the somites. By 30-36 hpf, expression in the somites is decreased, while strong expression is observed in the region of the developing glomeruli and in the anterior portion of the pronephric ducts, the pharyngeal arches, and the brain. By 72 hpf, expression remains only in the pronephros region.

The protein resides in the secreted. In terms of biological role, growth factor active in angiogenesis, vasculogenesis and endothelial cell growth. Induces endothelial cell proliferation, promotes cell migration, inhibits apoptosis, and induces permeabilization of blood vessels. Required for intersegmental vessel development in the tail during embryogenesis. Acts both upstream of kdr and tie1 to stimulate endothelial cell differentiation, and upstream of gata1 to stimulate hematopoietic cell differentiation. The polypeptide is Vascular endothelial growth factor A-A (vegfaa) (Danio rerio (Zebrafish)).